A 241-amino-acid chain; its full sequence is Carboxy-S-adenosyl-L-methionine synthase (241 aa).

S-adenosyl-L-methionine-binding positions include tyrosine 38, 63-65 (GCS), 88-89 (DN), 116-117 (DI), asparagine 131, and arginine 198.

Belongs to the class I-like SAM-binding methyltransferase superfamily. Cx-SAM synthase family. As to quaternary structure, homodimer.

It catalyses the reaction prephenate + S-adenosyl-L-methionine = carboxy-S-adenosyl-L-methionine + 3-phenylpyruvate + H2O. Catalyzes the conversion of S-adenosyl-L-methionine (SAM) to carboxy-S-adenosyl-L-methionine (Cx-SAM). The chain is Carboxy-S-adenosyl-L-methionine synthase from Actinobacillus pleuropneumoniae serotype 5b (strain L20).